Reading from the N-terminus, the 166-residue chain is Endoribonuclease YbeY (166 aa).

Zn(2+) is bound by residues H132, H136, and H142.

Belongs to the endoribonuclease YbeY family. Zn(2+) serves as cofactor.

It is found in the cytoplasm. Its function is as follows. Single strand-specific metallo-endoribonuclease involved in late-stage 70S ribosome quality control and in maturation of the 3' terminus of the 16S rRNA. The chain is Endoribonuclease YbeY from Clostridium botulinum (strain 657 / Type Ba4).